A 360-amino-acid polypeptide reads, in one-letter code: Photosystem II protein D1 2 (360 aa).

The next 3 helical transmembrane spans lie at 29–46 (YIGW…AATI), 118–133 (HFLI…EWEL), and 142–156 (WIPV…AATA). Histidine 118 is a binding site for chlorophyll a. Residue tyrosine 126 participates in pheophytin a binding. [CaMn4O5] cluster-binding residues include aspartate 170 and glutamate 189. A helical membrane pass occupies residues 197-218 (FHMLGVAGVFGGALFAAMHGSL). Histidine 198 contacts chlorophyll a. Residues histidine 215 and 264-265 (SF) contribute to the a quinone site. Histidine 215 contacts Fe cation. A Fe cation-binding site is contributed by histidine 272. Residues 274-288 (FLAAWPVVGIWFAAL) form a helical membrane-spanning segment. The [CaMn4O5] cluster site is built by histidine 332, glutamate 333, aspartate 342, and alanine 344. The propeptide occupies 345-360 (SGELAPVAMIAPSIEA).

The protein belongs to the reaction center PufL/M/PsbA/D family. As to quaternary structure, PSII is composed of 1 copy each of membrane proteins PsbA, PsbB, PsbC, PsbD, PsbE, PsbF, PsbH, PsbI, PsbJ, PsbK, PsbL, PsbM, PsbT, PsbX, PsbY, PsbZ, Psb30/Ycf12, peripheral proteins PsbO, CyanoQ (PsbQ), PsbU, PsbV and a large number of cofactors. It forms dimeric complexes. Requires The D1/D2 heterodimer binds P680, chlorophylls that are the primary electron donor of PSII, and subsequent electron acceptors. It shares a non-heme iron and each subunit binds pheophytin, quinone, additional chlorophylls, carotenoids and lipids. D1 provides most of the ligands for the Mn4-Ca-O5 cluster of the oxygen-evolving complex (OEC). There is also a Cl(-1) ion associated with D1 and D2, which is required for oxygen evolution. The PSII complex binds additional chlorophylls, carotenoids and specific lipids. as cofactor. In terms of processing, tyr-161 forms a radical intermediate that is referred to as redox-active TyrZ, YZ or Y-Z. Post-translationally, C-terminally processed by CtpA; processing is essential to allow assembly of the oxygen-evolving complex and thus photosynthetic growth.

The protein localises to the cellular thylakoid membrane. The catalysed reaction is 2 a plastoquinone + 4 hnu + 2 H2O = 2 a plastoquinol + O2. Functionally, photosystem II (PSII) is a light-driven water:plastoquinone oxidoreductase that uses light energy to abstract electrons from H(2)O, generating O(2) and a proton gradient subsequently used for ATP formation. It consists of a core antenna complex that captures photons, and an electron transfer chain that converts photonic excitation into a charge separation. The D1/D2 (PsbA/PsbD) reaction center heterodimer binds P680, the primary electron donor of PSII as well as several subsequent electron acceptors. The chain is Photosystem II protein D1 2 from Synechococcus elongatus.